A 457-amino-acid chain; its full sequence is Antizyme inhibitor 2 (457 aa).

The necessary for polyamine uptake stimulation stretch occupies residues 115-138; that stretch reads QVAQIKYAAKHGVRLLSFDNEVEL.

This sequence belongs to the Orn/Lys/Arg decarboxylase class-II family. ODC antizyme inhibitor subfamily. In terms of assembly, monomer. Interacts with OAZ1, OAZ2 and OAZ3; this interaction disrupts the interaction between the antizyme and ODC1. Does not form a heterodimer with ODC1. Ubiquitinated, leading to its proteasomal degradation; a process that is reduced in presence of antizymes. May also be degraded through the lysosomal degradative pathway in a proteasomal-independent manner.

It is found in the nucleus. The protein resides in the cytoplasm. The protein localises to the perinuclear region. It localises to the membrane. Its subcellular location is the cytoplasmic vesicle. It is found in the endoplasmic reticulum-Golgi intermediate compartment. The protein resides in the golgi apparatus. The protein localises to the cis-Golgi network. It localises to the trans-Golgi network. Its subcellular location is the cytoplasmic granule. It is found in the cell projection. The protein resides in the axon. The protein localises to the dendrite. It localises to the perikaryon. Functionally, antizyme inhibitor (AZI) protein that positively regulates ornithine decarboxylase (ODC) activity and polyamine uptake. AZI is an enzymatically inactive ODC homolog that counteracts the negative effect of ODC antizymes (AZs) OAZ1, OAZ2 and OAZ3 on ODC activity by competing with ODC for antizyme-binding. Inhibits antizyme-dependent ODC degradation and releases ODC monomers from their inactive complex with antizymes, leading to formation of the catalytically active ODC homodimer and restoring polyamine production. Participates in the morphological integrity of the trans-Golgi network (TGN) and functions as a regulator of intracellular secretory vesicle trafficking. In Rattus norvegicus (Rat), this protein is Antizyme inhibitor 2 (Azin2).